The following is a 65-amino-acid chain: Disintegrin VLO4 (65 aa).

Residues 1–65 (MNSGNPCCDP…PDCPRNPWKG (65 aa)) enclose the Disintegrin domain. 4 disulfide bridges follow: C7–C30, C21–C27, C26–C51, and C39–C58. Residues 43-45 (RGD) carry the Cell attachment site motif.

Belongs to the disintegrin family. Dimeric disintegrin subfamily. As to quaternary structure, homodimer; disulfide-linked. In terms of tissue distribution, expressed by the venom gland.

The protein localises to the secreted. Functionally, poor inhibitor of platelet aggregation. The disintegrin inhibits the adhesion of cells expressing the RGD-dependent integrin alpha-5/beta-1 (ITGA5/ITGB1) to immobilized fibronectin. Inhibition on alpha-2b/beta-3 (ITGA2B/ITGB3) is low. This Macrovipera lebetina obtusa (Levant blunt-nosed viper) protein is Disintegrin VLO4.